Reading from the N-terminus, the 171-residue chain is 3-hydroxydecanoyl-[acyl-carrier-protein] dehydratase (171 aa).

The active site involves His70.

The protein belongs to the thioester dehydratase family. FabA subfamily. In terms of assembly, homodimer.

Its subcellular location is the cytoplasm. The catalysed reaction is a (3R)-hydroxyacyl-[ACP] = a (2E)-enoyl-[ACP] + H2O. It carries out the reaction (3R)-hydroxydecanoyl-[ACP] = (2E)-decenoyl-[ACP] + H2O. It catalyses the reaction (2E)-decenoyl-[ACP] = (3Z)-decenoyl-[ACP]. The protein operates within lipid metabolism; fatty acid biosynthesis. Necessary for the introduction of cis unsaturation into fatty acids. Catalyzes the dehydration of (3R)-3-hydroxydecanoyl-ACP to E-(2)-decenoyl-ACP and then its isomerization to Z-(3)-decenoyl-ACP. Can catalyze the dehydratase reaction for beta-hydroxyacyl-ACPs with saturated chain lengths up to 16:0, being most active on intermediate chain length. This is 3-hydroxydecanoyl-[acyl-carrier-protein] dehydratase from Xanthomonas campestris pv. campestris (strain 8004).